We begin with the raw amino-acid sequence, 247 residues long: Small ribosomal subunit protein uS3 (247 aa).

One can recognise a KH type-2 domain in the interval 51-119 (VAKRDKRPAG…ELHLNIVEIR (69 aa)). Residues 224–233 (PSAHDRRQQE) show a composition bias toward basic and acidic residues. A disordered region spans residues 224 to 247 (PSAHDRRQQELQESGGASRPRRDR).

It belongs to the universal ribosomal protein uS3 family. As to quaternary structure, part of the 30S ribosomal subunit. Forms a tight complex with proteins S10 and S14.

In terms of biological role, binds the lower part of the 30S subunit head. Binds mRNA in the 70S ribosome, positioning it for translation. The sequence is that of Small ribosomal subunit protein uS3 from Jannaschia sp. (strain CCS1).